The following is a 126-amino-acid chain: Allergen Tha p 1 (126 aa).

The first 18 residues, 1–18, serve as a signal peptide directing secretion; sequence MKLLILALTCAAAVWARP.

It belongs to the insect A10/OS-D protein family.

Its subcellular location is the secreted. This chain is Allergen Tha p 1, found in Thaumetopoea pityocampa (Pine processionary moth).